The following is a 269-amino-acid chain: 3-methyl-2-oxobutanoate hydroxymethyltransferase (269 aa).

Mg(2+)-binding residues include Asp-50 and Asp-89. 3-methyl-2-oxobutanoate contacts are provided by residues 50 to 51, Asp-89, and Lys-118; that span reads DS. Residue Glu-120 coordinates Mg(2+). Catalysis depends on Glu-187, which acts as the Proton acceptor.

Belongs to the PanB family. In terms of assembly, homodecamer; pentamer of dimers. Mg(2+) serves as cofactor.

The protein resides in the cytoplasm. It carries out the reaction 3-methyl-2-oxobutanoate + (6R)-5,10-methylene-5,6,7,8-tetrahydrofolate + H2O = 2-dehydropantoate + (6S)-5,6,7,8-tetrahydrofolate. It participates in cofactor biosynthesis; (R)-pantothenate biosynthesis; (R)-pantoate from 3-methyl-2-oxobutanoate: step 1/2. Its function is as follows. Catalyzes the reversible reaction in which hydroxymethyl group from 5,10-methylenetetrahydrofolate is transferred onto alpha-ketoisovalerate to form ketopantoate. This Nitrosomonas eutropha (strain DSM 101675 / C91 / Nm57) protein is 3-methyl-2-oxobutanoate hydroxymethyltransferase.